The chain runs to 192 residues: Ion-translocating oxidoreductase complex subunit A (192 aa).

Transmembrane regions (helical) follow at residues Leu5–Leu25, Ile39–Val59, Leu65–Val85, Ala102–Leu122, Ala134–Met154, and Ala171–Val191.

It belongs to the NqrDE/RnfAE family. As to quaternary structure, the complex is composed of six subunits: RnfA, RnfB, RnfC, RnfD, RnfE and RnfG.

The protein localises to the cell inner membrane. Functionally, part of a membrane-bound complex that couples electron transfer with translocation of ions across the membrane. This Shewanella sp. (strain ANA-3) protein is Ion-translocating oxidoreductase complex subunit A.